Consider the following 446-residue polypeptide: Phosphoglucosamine mutase (446 aa).

The active-site Phosphoserine intermediate is S99. Mg(2+)-binding residues include S99, D242, D244, and D246. S99 is modified (phosphoserine).

It belongs to the phosphohexose mutase family. Mg(2+) serves as cofactor. Activated by phosphorylation.

The catalysed reaction is alpha-D-glucosamine 1-phosphate = D-glucosamine 6-phosphate. Catalyzes the conversion of glucosamine-6-phosphate to glucosamine-1-phosphate. The chain is Phosphoglucosamine mutase from Wolinella succinogenes (strain ATCC 29543 / DSM 1740 / CCUG 13145 / JCM 31913 / LMG 7466 / NCTC 11488 / FDC 602W) (Vibrio succinogenes).